We begin with the raw amino-acid sequence, 91 residues long: Small ribosomal subunit protein uS19 (91 aa).

It belongs to the universal ribosomal protein uS19 family.

In terms of biological role, protein S19 forms a complex with S13 that binds strongly to the 16S ribosomal RNA. In Sphingopyxis alaskensis (strain DSM 13593 / LMG 18877 / RB2256) (Sphingomonas alaskensis), this protein is Small ribosomal subunit protein uS19.